Here is a 438-residue protein sequence, read N- to C-terminus: ATP-dependent RNA helicase SUB2 (438 aa).

Over residues 1–19 (MSHEGEEDLLEYSDNEQEI) the composition is skewed to acidic residues. The disordered stretch occupies residues 1–44 (MSHEGEEDLLEYSDNEQEIQVDNTKATEVAGNGEEAADGKDGDK). The Q motif motif lies at 54 to 82 (TGFKDFLLKPELSRAIIDCGFEHPSEVQQ). The Helicase ATP-binding domain occupies 85–260 (IPQSIHGTDV…RRFLQNPLEI (176 aa)). 98-105 (AKSGLGKT) is an ATP binding site. A DECD box motif is present at residues 207–210 (DECD). The 162-residue stretch at 272 to 433 (GLQQYYIRLE…EFPEEGVDPS (162 aa)) folds into the Helicase C-terminal domain.

Belongs to the DEAD box helicase family. DECD subfamily.

The protein localises to the nucleus. The enzyme catalyses ATP + H2O = ADP + phosphate + H(+). In terms of biological role, ATP-binding RNA helicase involved in transcription elongation and required for the export of mRNA out of the nucleus. SUB2 also plays a role in pre-mRNA splicing and spliceosome assembly. May be involved in rDNA and telomeric silencing, and maintenance of genome integrity. In Eremothecium gossypii (strain ATCC 10895 / CBS 109.51 / FGSC 9923 / NRRL Y-1056) (Yeast), this protein is ATP-dependent RNA helicase SUB2 (SUB2).